Here is a 342-residue protein sequence, read N- to C-terminus: MVQNIAILGASGYTGAELVRLIATHPAMRIVALSGDRKAGMAMSEVFPFLRHLDLPRLQKIEEIDFSSVDLAFCALPHATSQAVIADLPRDLKVVDLSADFRLRDPAAYETWYGKPHAAPELQKEAVYGLTEFYRDEIRGARLVAGTGCNAATGQYAIRPLIEAGVIDLDDILIDLKAGVSGAGRSLKENLLHAELSEGTHAYSAGGRHRHLGEFDQEFSKIAGRPVQVRFTPHLTPMNRGILANVYVKGDPQAVHRALAERYLTETFLEVLPFGALPSTRDIRGSNYVHIGVIGDRVPGCAMVVAVLDNLCKGSSGQAIQNANLMLGLDEAEGLRLAPVFP.

C149 is an active-site residue.

Belongs to the NAGSA dehydrogenase family. Type 1 subfamily.

The protein localises to the cytoplasm. The catalysed reaction is N-acetyl-L-glutamate 5-semialdehyde + phosphate + NADP(+) = N-acetyl-L-glutamyl 5-phosphate + NADPH + H(+). It functions in the pathway amino-acid biosynthesis; L-arginine biosynthesis; N(2)-acetyl-L-ornithine from L-glutamate: step 3/4. Its function is as follows. Catalyzes the NADPH-dependent reduction of N-acetyl-5-glutamyl phosphate to yield N-acetyl-L-glutamate 5-semialdehyde. This Cereibacter sphaeroides (strain ATCC 17029 / ATH 2.4.9) (Rhodobacter sphaeroides) protein is N-acetyl-gamma-glutamyl-phosphate reductase.